A 402-amino-acid chain; its full sequence is Hyaluronan and proteoglycan link protein 4 (402 aa).

A signal peptide spans 1-29 (MVCARAALGPGALWAAAWGVLLLTAPAGA). Residues 46–161 (SVVVQTAPGQ…DAGMVKLDLE (116 aa)) enclose the Ig-like C2-type domain. Intrachain disulfides connect cysteine 68-cysteine 143, cysteine 185-cysteine 266, cysteine 209-cysteine 230, cysteine 293-cysteine 363, and cysteine 318-cysteine 339. The N-linked (GlcNAc...) asparagine glycan is linked to asparagine 132. Link domains lie at 163–268 (VVFP…FCFT) and 273–365 (GRVF…YCYR).

This sequence belongs to the HAPLN family. Expressed predominantly in brain.

The protein resides in the secreted. Its subcellular location is the extracellular space. It is found in the extracellular matrix. Functionally, essential for the proper localization of brevican (BCAN), mainly as a perineuronal nets (PNNs)-type deposition in the brainstem and cerebellum thereby playing a key role in the formation and structural organization of PNNs. Contributes to the formation and transmission of inhibitory GABAergic synapses between Purkinje cells and deep cerebellar nuclei neurons. The polypeptide is Hyaluronan and proteoglycan link protein 4 (HAPLN4) (Homo sapiens (Human)).